Here is a 144-residue protein sequence, read N- to C-terminus: MAKKVQAYIKLQVKAGQANPSPPVGPALGQHGVNIMEFCKAFNAKTQSLEPGLPTPVIITVYSDRSFTFETKSTPAAVLLKKAAGLKSGSPRPNTQKVGTVTRAQLEEIVVAKQADLTASNMDAAVRTIAGSARAMGLEVEGVN.

Belongs to the universal ribosomal protein uL11 family. In terms of assembly, part of the ribosomal stalk of the 50S ribosomal subunit. Interacts with L10 and the large rRNA to form the base of the stalk. L10 forms an elongated spine to which L12 dimers bind in a sequential fashion forming a multimeric L10(L12)X complex. Post-translationally, one or more lysine residues are methylated.

Its function is as follows. Forms part of the ribosomal stalk which helps the ribosome interact with GTP-bound translation factors. This chain is Large ribosomal subunit protein uL11, found in Marinomonas sp. (strain MWYL1).